A 265-amino-acid chain; its full sequence is Large ribosomal subunit protein eL8 (265 aa).

The protein belongs to the eukaryotic ribosomal protein eL8 family. Interacts with cmd-1 in the presence of Ca(2+).

This is Large ribosomal subunit protein eL8 from Caenorhabditis elegans.